A 136-amino-acid polypeptide reads, in one-letter code: ATP synthase epsilon chain (136 aa).

Residues 104–136 (AGMEGQPASPEKVKAQQQLNEARARMQASKSAD) are disordered.

Belongs to the ATPase epsilon chain family. As to quaternary structure, F-type ATPases have 2 components, CF(1) - the catalytic core - and CF(0) - the membrane proton channel. CF(1) has five subunits: alpha(3), beta(3), gamma(1), delta(1), epsilon(1). CF(0) has three main subunits: a, b and c.

The protein localises to the cellular thylakoid membrane. Produces ATP from ADP in the presence of a proton gradient across the membrane. The polypeptide is ATP synthase epsilon chain (Synechococcus sp. (strain CC9902)).